A 151-amino-acid chain; its full sequence is Monooxygenase nsrQ (151 aa).

Belongs to the avfA family.

It participates in secondary metabolite biosynthesis. Functionally, monooxygenase; part of the gene cluster that mediates the biosynthesis of the tetrahydroxanthone dimer neosartorin, which exhibits antibacterial activity. The two different monomeric units appear to be synthesized by the same set of enzymes, among which the Baeyer-Villiger monooxygenase nsrF is the key enzyme for the divergence of the biosynthetic routes. The pathway begins with the synthesis of atrochrysone thioester by the polyketide synthase nsrB. The atrochrysone carboxyl ACP thioesterase nsrC then breaks the thioester bond and releases the atrochrysone carboxylic acid from AacuL. Atrochrysone carboxylic acid is decarboxylated by the decarboxylase nsrE, and oxidized by the anthrone oxygenase nsrD to yield emodin. Emodin is then reduced to emodin hydroquinone by the oxidoreductase nsrR. A-ring reduction by the short chain dehydrogenase nsrJ, dehydration by the scytalone dehydratase-like protein nsrI and probable spontaneous re-oxidation, results in overall deoxygenation to chrysophanol. The Baeyer-Villiger monooxygenase nsrF accepts chrysophanol as a substrate to insert one oxygen atom at two different positions to yield the precursors of both monomric units. NsrF is promiscuous/flexible in interacting with the 2 (non methylated and methylated) aromatic rings of chrysophanol, thus diverging the biosynthetic pathway at this point. After the hydrolysis of the lactones, methylesterification by the methyltransferase nsrG yields respectively moniliphenone and 2,2',6'-trihydroxy-4-methyl-6-methoxya-cyldiphenylmethanone. The next steps are the hydroxylation by the FAD-dependent monooxygenase nsrK, followed by isomerization by the monooxygenase nsrQ. The short chain dehydrogenase/reductase nsrO then catalyzes the C-5 ketoreduction to give the xanthone skeleton of blennolide C and 5-acetylblennolide A. The acetyltransferase nsrL has a strict substrate specificity and uses only blennolide A but not blennolide C to yield 5-acetylblennolide A as the single-acetylated product. In the final step of the biosynthesis, the heterodimerization of the 2 xanthones, blennolide C and 5-acetylblennolide A, is catalyzed by the cytochrome P450 monooxygenase nsrP. NsrP can utilize at least three different xanthones as its substrates to perform the dimerization reaction. The sequence is that of Monooxygenase nsrQ from Aspergillus novofumigatus (strain IBT 16806).